A 654-amino-acid chain; its full sequence is MPRPVLSVTAFCHRLGKRESKRSFMGNSSNSWVLPREEAQGWMGQAVQGGTRTSRSHASFPKLELGLGHRPSPTREPPTCSICLERLREPISLDCGHDFCIRCFSTHRIPGCELPCCPECRKICKQRKGLRSLGERMKLLPQRPLPPALQETCAVRAERLLLVRINASGGLILRMGAINRCLKHPLARDTPVCLLAVLGEQHSGKSFLLDHLLSGLPSLESGDSGRPRAEGSLPGIRWGANGLTRGIWMWSHPFLLGKEGKKVAVFLVDTGDVMSPELSKETRVKLCALTMMLSSYQILNTSQELKDTDLGYLEMFVHVAEVMGKHYGMVPIQHLDLLVRDSSHHNKSGQGHVGDILQKLSGKYPKVQELLLGKRARCYLLPAPERQWVNKDQASPRGNTEDDFSHHFRAYILDVLSTAPQHAKSRCQGYWSEGRAVARGDRRLLTGQQLAQEIKNLSGWMGKTGPSFNSPDEMAAQLHDLRKVEAAKKEFEEYVRQQDIATKRIFSALRVLPDTMRNLLSTQKDAILARHGVALLCKEREQTLEALEAELQAEAKAFMDSYTMRFCGHLAAVGGAVGAGLMGLAGGVVGAGMAAAALAAEAGMVAAGAAVGATGAAVVGGGVGAGLAATVGCMEKEEDERVQGGDREPLLQEE.

The RING-type zinc finger occupies 80–121 (CSICLERLREPISLDCGHDFCIRCFSTHRIPGCELPCCPECR). The interval 154–654 (AVRAERLLLV…GDREPLLQEE (501 aa)) is interaction with ZBTB16. The region spanning 189–420 (DTPVCLLAVL…YILDVLSTAP (232 aa)) is the GB1/RHD3-type G domain. Residue 340–341 (RD) coordinates GTP. The next 2 helical transmembrane spans lie at 570–590 (LAAVGGAVGAGLMGLAGGVVG) and 603–623 (GMVAAGAAVGATGAAVVGGGV).

Belongs to the TRAFAC class dynamin-like GTPase superfamily. GB1/RHD3 GTPase family. GB1 subfamily. Self-associates. Interacts with SP1 in an oxidative stress-regulated manner. Interacts with SIGMAR1 in an oxidative stress-regulated manner. Interacts with ZBTB16 (via C2H2-type zinc finger domains 1 and 2). Auto-ubiquitinated. Expressed in most of the brain areas, including cortex, striatum, hippocampus, thalamus, and cerebellum (at protein level). Expressed in lateral amygdaloid nucleus, and ventromedial hypothalamus. Also expressed strongly in the marginal zone of brain vesicles, optic stalk, and cartilage primordium.

It is found in the membrane. It localises to the cytoplasm. Its subcellular location is the nucleus. The protein resides in the nuclear body. The protein localises to the nucleoplasm. It is found in the endosome. It localises to the cytoplasmic vesicle. Its subcellular location is the secretory vesicle. The protein resides in the synaptic vesicle. The protein localises to the postsynaptic density. It is found in the perikaryon. It localises to the cell projection. Its subcellular location is the neuron projection. The enzyme catalyses S-ubiquitinyl-[E2 ubiquitin-conjugating enzyme]-L-cysteine + [acceptor protein]-L-lysine = [E2 ubiquitin-conjugating enzyme]-L-cysteine + N(6)-ubiquitinyl-[acceptor protein]-L-lysine.. It participates in protein modification; protein ubiquitination. Functionally, E3 ubiquitin-protein ligase that plays an important role in neuronal differentiation, including neurogenesis and gliogenesis, during brain development. During embryonic development initiates neuronal differentiation by inducing cell cycle arrest at the G0/G1 phase through up-regulation of cell-cycle regulatory proteins. Plays a role not only in the fetal period during the development of the nervous system, but also in the adult brain, where it is involved in the maintenance of neural functions and protection of the nervous tissue cells from oxidative stress-induced damage. Exhibits GTPase and E3 ubiquitin-protein ligase activities. Regulates dendritic spine density and synaptic neurotransmission; its ability to hydrolyze GTP is involved in the maintenance of dendritic spine density. The polypeptide is RING finger protein 112 (Rnf112) (Mus musculus (Mouse)).